A 348-amino-acid polypeptide reads, in one-letter code: Dihydroorotase (348 aa).

Positions 17 and 19 each coordinate Zn(2+). Substrate contacts are provided by residues 19 to 21 and Asn-45; that span reads HLR. 3 residues coordinate Zn(2+): Lys-103, His-140, and His-178. Lys-103 carries the post-translational modification N6-carboxylysine. His-140 is a substrate binding site. Leu-223 is a substrate binding site. Asp-251 serves as a coordination point for Zn(2+). The active site involves Asp-251. Residues His-255 and Ala-267 each contribute to the substrate site.

It belongs to the metallo-dependent hydrolases superfamily. DHOase family. Class II DHOase subfamily. As to quaternary structure, homodimer. It depends on Zn(2+) as a cofactor.

It catalyses the reaction (S)-dihydroorotate + H2O = N-carbamoyl-L-aspartate + H(+). It participates in pyrimidine metabolism; UMP biosynthesis via de novo pathway; (S)-dihydroorotate from bicarbonate: step 3/3. In terms of biological role, catalyzes the reversible cyclization of carbamoyl aspartate to dihydroorotate. The sequence is that of Dihydroorotase from Shigella dysenteriae serotype 1 (strain Sd197).